The chain runs to 347 residues: tRNA N6-adenosine threonylcarbamoyltransferase (347 aa).

Residues His-115 and His-119 each contribute to the Fe cation site. Substrate is bound by residues 137–141 (LASGG), Asp-170, Gly-183, and Asn-281. Asp-309 is a binding site for Fe cation.

This sequence belongs to the KAE1 / TsaD family. Fe(2+) is required as a cofactor.

It localises to the cytoplasm. The enzyme catalyses L-threonylcarbamoyladenylate + adenosine(37) in tRNA = N(6)-L-threonylcarbamoyladenosine(37) in tRNA + AMP + H(+). Functionally, required for the formation of a threonylcarbamoyl group on adenosine at position 37 (t(6)A37) in tRNAs that read codons beginning with adenine. Is involved in the transfer of the threonylcarbamoyl moiety of threonylcarbamoyl-AMP (TC-AMP) to the N6 group of A37, together with TsaE and TsaB. TsaD likely plays a direct catalytic role in this reaction. This chain is tRNA N6-adenosine threonylcarbamoyltransferase, found in Methylorubrum extorquens (strain CM4 / NCIMB 13688) (Methylobacterium extorquens).